A 215-amino-acid chain; its full sequence is Peptide methionine sulfoxide reductase MsrA (215 aa).

The active site involves C57.

Belongs to the MsrA Met sulfoxide reductase family.

It carries out the reaction L-methionyl-[protein] + [thioredoxin]-disulfide + H2O = L-methionyl-(S)-S-oxide-[protein] + [thioredoxin]-dithiol. It catalyses the reaction [thioredoxin]-disulfide + L-methionine + H2O = L-methionine (S)-S-oxide + [thioredoxin]-dithiol. Functionally, has an important function as a repair enzyme for proteins that have been inactivated by oxidation. Catalyzes the reversible oxidation-reduction of methionine sulfoxide in proteins to methionine. In Saccharophagus degradans (strain 2-40 / ATCC 43961 / DSM 17024), this protein is Peptide methionine sulfoxide reductase MsrA.